We begin with the raw amino-acid sequence, 953 residues long: ABC transporter A family member 11 (953 aa).

The next 6 helical transmembrane spans lie at 33–53, 230–250, 277–297, 307–327, 341–361, and 417–437; these read CLQIFSSFFFILLIFCIEEAM, GPVFFLAFSMFGFVLQLGALV, TWEGILTLVSSLFLVLFGMIF, FVLVFLLFLLFQFNMIGLAFA, VGFLVFLIGFITQFVSATGFP, and VISINIIYQWLLGTFLFWFVL. An ABC transporter domain is found at 519–764; that stretch reads VQIHGLAKTY…FGTGFVATVS (246 aa). Residue 565–572 participates in ATP binding; that stretch reads GPNGAGKT.

This sequence belongs to the ABC transporter superfamily. ABCA family. CPR flippase (TC 3.A.1.211) subfamily.

Its subcellular location is the membrane. The polypeptide is ABC transporter A family member 11 (ABCA11) (Arabidopsis thaliana (Mouse-ear cress)).